Reading from the N-terminus, the 310-residue chain is Bifunctional protein FolD 3, chloroplastic (310 aa).

The transit peptide at 1–48 (MFTDCSSSTTSRLIHLYNRNGVFLPRPSVSQFSLRTTASTWRCTLSIR) directs the protein to the chloroplast.

The protein belongs to the tetrahydrofolate dehydrogenase/cyclohydrolase family. As to quaternary structure, homodimer.

Its subcellular location is the plastid. The protein localises to the chloroplast. The catalysed reaction is (6R)-5,10-methylene-5,6,7,8-tetrahydrofolate + NADP(+) = (6R)-5,10-methenyltetrahydrofolate + NADPH. It carries out the reaction (6R)-5,10-methenyltetrahydrofolate + H2O = (6R)-10-formyltetrahydrofolate + H(+). It functions in the pathway one-carbon metabolism; tetrahydrofolate interconversion. Functionally, catalyzes the oxidation of 5,10-methylenetetrahydrofolate to 5,10-methenyltetrahydrofolate and then the hydrolysis of 5,10-methenyltetrahydrofolate to 10-formyltetrahydrofolate. The chain is Bifunctional protein FolD 3, chloroplastic (FOLD3) from Arabidopsis thaliana (Mouse-ear cress).